A 329-amino-acid chain; its full sequence is Protein mlo2 (329 aa).

The UBR-type zinc finger occupies 33-104; that stretch reads DTCTYSMGYL…HSIPCNLRKS (72 aa). Residues 120 to 179 form a PHD-type zinc finger; sequence GRFCICDTVYNPETEEGTMFQCILCEDWFHEKCLQKTNKGIAIPDAETFEWLVCSECSEK.

It belongs to the UBR7 family.

Not known, interfere with mitotic chromosome segregation when overexpressed. The polypeptide is Protein mlo2 (mlo2) (Schizosaccharomyces pombe (strain 972 / ATCC 24843) (Fission yeast)).